The sequence spans 245 residues: DNA polymerase sliding clamp (245 aa).

This sequence belongs to the PCNA family. In terms of assembly, homotrimer. The subunits circularize to form a toroid; DNA passes through its center. Replication factor C (RFC) is required to load the toroid on the DNA.

Sliding clamp subunit that acts as a moving platform for DNA processing. Responsible for tethering the catalytic subunit of DNA polymerase and other proteins to DNA during high-speed replication. This chain is DNA polymerase sliding clamp, found in Methanosarcina barkeri (strain Fusaro / DSM 804).